The following is a 93-amino-acid chain: Alpha-defensin 6/12 (93 aa).

An N-terminal signal peptide occupies residues 1–19; sequence MKTLILLSALVLLAFQVQA. Positions 20-60 are excised as a propeptide; the sequence is DPIQNTDEETKTEEQPGEEDQAVSVSFGDPEGTSLQEESLR. Positions 23–54 are disordered; that stretch reads QNTDEETKTEEQPGEEDQAVSVSFGDPEGTSL. Cystine bridges form between Cys64/Cys92, Cys66/Cys81, and Cys71/Cys91.

The protein belongs to the alpha-defensin family. As to expression, paneth cells of the small bowel.

It is found in the secreted. In terms of biological role, has broad-spectrum antimicrobial properties. Has antibacterial activity against the Gram-positive bacterium L.monocytogenes EGD and the Gram-negative bacteria E.coli ML-35p and avirulent S.typhimurium 7953, but not against the mouse-virulent S.typhimurium 14028S. Probably contributes to the antimicrobial barrier function of the small bowel mucosa. The chain is Alpha-defensin 6/12 (Defa6) from Mus musculus (Mouse).